Reading from the N-terminus, the 353-residue chain is ATP-dependent kinase YFH7 (353 aa).

G31–T39 is a binding site for ATP.

The protein belongs to the YFH7 family.

In terms of biological role, ATP-dependent kinase that could be involved in endoplasmic reticulum membrane assembly. This chain is ATP-dependent kinase YFH7 (YFH7), found in Saccharomyces cerevisiae (strain ATCC 204508 / S288c) (Baker's yeast).